The sequence spans 159 residues: Large ribosomal subunit protein uL10 (159 aa).

Belongs to the universal ribosomal protein uL10 family. As to quaternary structure, part of the ribosomal stalk of the 50S ribosomal subunit. The N-terminus interacts with L11 and the large rRNA to form the base of the stalk. The C-terminus forms an elongated spine to which L12 dimers bind in a sequential fashion forming a multimeric L10(L12)X complex.

Its function is as follows. Forms part of the ribosomal stalk, playing a central role in the interaction of the ribosome with GTP-bound translation factors. This chain is Large ribosomal subunit protein uL10, found in Campylobacter jejuni subsp. jejuni serotype O:6 (strain 81116 / NCTC 11828).